The sequence spans 252 residues: Cell division protein ZapD (252 aa).

This sequence belongs to the ZapD family. In terms of assembly, interacts with FtsZ.

The protein resides in the cytoplasm. Cell division factor that enhances FtsZ-ring assembly. Directly interacts with FtsZ and promotes bundling of FtsZ protofilaments, with a reduction in FtsZ GTPase activity. The sequence is that of Cell division protein ZapD from Chromobacterium violaceum (strain ATCC 12472 / DSM 30191 / JCM 1249 / CCUG 213 / NBRC 12614 / NCIMB 9131 / NCTC 9757 / MK).